A 463-amino-acid chain; its full sequence is Asparagine--tRNA ligase (463 aa).

This sequence belongs to the class-II aminoacyl-tRNA synthetase family. Homodimer.

The protein resides in the cytoplasm. It carries out the reaction tRNA(Asn) + L-asparagine + ATP = L-asparaginyl-tRNA(Asn) + AMP + diphosphate + H(+). The protein is Asparagine--tRNA ligase of Clostridium botulinum (strain Langeland / NCTC 10281 / Type F).